We begin with the raw amino-acid sequence, 298 residues long: U1 small nuclear ribonucleoprotein A (298 aa).

2 RRM domains span residues 2 to 113 (SALY…KART) and 227 to 298 (KVLL…GFAK).

The protein belongs to the RRM U1 A/B'' family. As to quaternary structure, component of the spliceosome where it is associated with snRNP U1.

The protein localises to the nucleus. Functionally, involved in nuclear mRNA splicing. The principal role of the U1A is to help fold or maintain U1 RNA in an active configuration. It is the first snRNP to interact with pre-mRNA. This interaction is required for the subsequent binding of U2 snRNP and the U4/U6/U5 tri-snRNP. The chain is U1 small nuclear ribonucleoprotein A (MUD1) from Saccharomyces cerevisiae (strain ATCC 204508 / S288c) (Baker's yeast).